A 681-amino-acid polypeptide reads, in one-letter code: Secretion system apparatus protein SsaV (681 aa).

7 helical membrane-spanning segments follow: residues 24–44, 48–68, 73–93, 118–138, 206–226, 244–264, and 295–315; these read MVLA…LPTW, ILIT…IYLS, LSVF…LTIS, GNLT…FIVI, TIAG…IAIV, IGDG…AGII, and AVVL…LAFF.

It belongs to the FHIPEP (flagella/HR/invasion proteins export pore) family.

The protein resides in the cell inner membrane. Component of Salmonella pathogenicity island 2 (SPI-2) type III secretion system, required for secretion of some type III-secreted effectors including the SpvB exotoxin. The chain is Secretion system apparatus protein SsaV (ssaV) from Salmonella typhimurium (strain 14028s / SGSC 2262).